The sequence spans 930 residues: Progesterone receptor (930 aa).

Residues Met-1–Ala-11 show a composition bias toward basic and acidic residues. 2 disordered regions span residues Met-1–Ala-133 and Leu-148–Ala-260. Residues Met-1–Leu-165 form an AF3; mediates transcriptional activation region. The interval Met-1–Gln-565 is modulating, Pro-Rich. Lys-7 participates in a covalent cross-link: Glycyl lysine isopeptide (Lys-Gly) (interchain with G-Cter in SUMO). Residue Ser-20 is modified to Phosphoserine. Positions Gln-38–Val-49 are enriched in polar residues. The short motif at Leu-56–Leu-60 is the LXXL motif 1 element. The residue at position 82 (Ser-82) is a Phosphoserine. The short motif at Leu-116–Leu-120 is the LXXL motif 2 element. A Phosphoserine modification is found at Ser-131. Residues Met-166–His-304 are mediates transcriptional transrepression. The Nuclear localization signal signature appears at Lys-184–Arg-188. The span at Pro-187 to Pro-204 shows a compositional bias: low complexity. Ser-191 and Ser-212 each carry phosphoserine. The residue at position 293 (Ser-293) is a Phosphoserine; by MAPK1. A disordered region spans residues Ala-334–Asp-356. Ser-344 is subject to Phosphoserine; by MAPK. Lys-387 is covalently cross-linked (Glycyl lysine isopeptide (Lys-Gly) (interchain with G-Cter in SUMO); alternate). Residue Lys-387 forms a Glycyl lysine isopeptide (Lys-Gly) (interchain with G-Cter in ubiquitin); alternate linkage. Ser-399 carries the post-translational modification Phosphoserine; by CDK2. The disordered stretch occupies residues Asp-415–Ser-454. Residues Ala-420–Val-430 are compositionally biased toward pro residues. The segment covering Pro-431–Ser-454 has biased composition (low complexity). The AF1; mediates transcriptional activation stretch occupies residues Ser-457 to Arg-547. A Glycyl lysine isopeptide (Lys-Gly) (interchain with G-Cter in SUMO) cross-link involves residue Lys-532. Residues Lys-566 to Phe-640 constitute a DNA-binding region (nuclear receptor). NR C4-type zinc fingers lie at residues Cys-568 to Cys-588 and Cys-604 to Cys-628. At Ser-673 the chain carries Phosphoserine. The region spanning Gln-676 to Ile-910 is the NR LBD domain. Positions Leu-684–Lys-930 are AF2; mediates transcriptional activation. Arg-763 is a progesterone binding site.

Belongs to the nuclear hormone receptor family. NR3 subfamily. As to quaternary structure, interacts with SMARD1 and UNC45A. Interacts with CUEDC2; the interaction promotes ubiquitination, decreases sumoylation, and represses transcriptional activity. Interacts with PIAS3; the interaction promotes sumoylation of PR in a hormone-dependent manner, inhibits DNA-binding, and alters nuclear export. Interacts with SP1; the interaction requires ligand-induced phosphorylation on Ser-344 by ERK1/2-MAPK. Interacts with PRMT2. Interacts with NCOA2 and NCOA1. Interacts with KLF9. Interacts with GTF2B. In terms of processing, phosphorylated on multiple serine sites. Several of these sites are hormone-dependent. Phosphorylation on Ser-293 is highly hormone-dependent and modulates ubiquitination and sumoylation on Lys-387. Phosphorylation on Ser-102 and Ser-344 also requires induction by hormone. Basal phosphorylation on Ser-82, Ser-191 and Ser-399 is increased in response to progesterone and can be phosphorylated in vitro by the CDK2-A1 complex. Increased levels of phosphorylation on Ser-399 also in the presence of EGF, heregulin, IGF, PMA and FBS. Phosphorylation at this site by CDK2 is ligand-independent, and increases nuclear translocation and transcriptional activity. Phosphorylation at Ser-293, but not at Ser-191, is impaired during the G(2)/M phase of the cell cycle. Phosphorylation on Ser-344 by ERK1/2 MAPK is required for interaction with SP1. Sumoylation is hormone-dependent and represses transcriptional activity. Sumoylation on all three sites is enhanced by PIAS3. Desumoylated by SENP1. Sumoylation on Lys-387, the main site of sumoylation, is repressed by ubiquitination on the same site, and modulated by phosphorylation at Ser-293. Post-translationally, ubiquitination is hormone-dependent and represses sumoylation on the same site. Promoted by MAPK-mediated phosphorylation on Ser-293. Ubiquitinated by UBR5, leading to its degradation: UBR5 specifically recognizes and binds ligand-bound PGR when it is not associated with coactivators (NCOAs). In presence of NCOAs, the UBR5-degron is not accessible, preventing its ubiquitination and degradation. In terms of processing, palmitoylated by ZDHHC7 and ZDHHC21. Palmitoylation is required for plasma membrane targeting and for rapid intracellular signaling via ERK and AKT kinases and cAMP generation.

It is found in the nucleus. The protein localises to the cytoplasm. The steroid hormones and their receptors are involved in the regulation of eukaryotic gene expression and affect cellular proliferation and differentiation in target tissues. Transcriptional activator of several progesteron-dependent promoters in a variety of cell types. Involved in activation of SRC-dependent MAPK signaling on hormone stimulation. The polypeptide is Progesterone receptor (PGR) (Oryctolagus cuniculus (Rabbit)).